Consider the following 159-residue polypeptide: SsrA-binding protein (159 aa).

Residues 137-159 (KRQTEKERDWEREKQRLFQRDQR) form a disordered region.

Belongs to the SmpB family.

It localises to the cytoplasm. In terms of biological role, required for rescue of stalled ribosomes mediated by trans-translation. Binds to transfer-messenger RNA (tmRNA), required for stable association of tmRNA with ribosomes. tmRNA and SmpB together mimic tRNA shape, replacing the anticodon stem-loop with SmpB. tmRNA is encoded by the ssrA gene; the 2 termini fold to resemble tRNA(Ala) and it encodes a 'tag peptide', a short internal open reading frame. During trans-translation Ala-aminoacylated tmRNA acts like a tRNA, entering the A-site of stalled ribosomes, displacing the stalled mRNA. The ribosome then switches to translate the ORF on the tmRNA; the nascent peptide is terminated with the 'tag peptide' encoded by the tmRNA and targeted for degradation. The ribosome is freed to recommence translation, which seems to be the essential function of trans-translation. The protein is SsrA-binding protein of Cellvibrio japonicus (strain Ueda107) (Pseudomonas fluorescens subsp. cellulosa).